A 321-amino-acid chain; its full sequence is Methionine import ATP-binding protein MetN (321 aa).

The region spanning 2 to 241 is the ABC transporter domain; it reads INAVDLHKVY…PGSLLARSLF (240 aa). 38–45 serves as a coordination point for ATP; it reads GPSGAGKS.

This sequence belongs to the ABC transporter superfamily. Methionine importer (TC 3.A.1.24) family. The complex is composed of two ATP-binding proteins (MetN), two transmembrane proteins (MetI) and a solute-binding protein (MetQ).

It is found in the cell membrane. It catalyses the reaction L-methionine(out) + ATP + H2O = L-methionine(in) + ADP + phosphate + H(+). It carries out the reaction D-methionine(out) + ATP + H2O = D-methionine(in) + ADP + phosphate + H(+). In terms of biological role, part of the ABC transporter complex MetNIQ involved in methionine import. Responsible for energy coupling to the transport system. This is Methionine import ATP-binding protein MetN from Thermobifida fusca (strain YX).